Reading from the N-terminus, the 553-residue chain is Syntaxin-binding protein 4 (553 aa).

S10, S12, S99, and S212 each carry phosphoserine. Positions 19 to 105 (AFQMITIAKE…RLESAWEIAF (87 aa)) constitute a PDZ domain. Residues 291–417 (SSEADEMERL…VLDCQLRKSE (127 aa)) adopt a coiled-coil conformation. At S463 the chain carries Phosphoserine. In terms of domain architecture, WW spans 496-529 (DCLPYGWEEAYTADGIKYFINHVTQTTSWIHPVM).

As to quaternary structure, interacts with STX4A. Phosphorylated on Ser-99 by PKB/AKT2 after insulin treatment. Phosphorylation on Ser-99 abolishes the interaction with STX4A.

It is found in the cytoplasm. Its function is as follows. Plays a role in the translocation of transport vesicles from the cytoplasm to the plasma membrane. Inhibits the translocation of SLC2A4 from intracellular vesicles to the plasma membrane by STX4A binding and preventing the interaction between STX4A and VAMP2. Stimulation with insulin disrupts the interaction with STX4A, leading to increased levels of SLC2A4 at the plasma membrane. May also play a role in the regulation of insulin release by pancreatic beta cells after stimulation by glucose. The chain is Syntaxin-binding protein 4 (STXBP4) from Homo sapiens (Human).